A 911-amino-acid polypeptide reads, in one-letter code: Protein translocase subunit SecA (911 aa).

ATP contacts are provided by residues glutamine 86, 104 to 108, and aspartate 512; that span reads GEGKT. Zn(2+) is bound by residues cysteine 895, cysteine 897, cysteine 906, and histidine 907.

It belongs to the SecA family. As to quaternary structure, monomer and homodimer. Part of the essential Sec protein translocation apparatus which comprises SecA, SecYEG and auxiliary proteins SecDF-YajC and YidC. Requires Zn(2+) as cofactor.

The protein localises to the cell inner membrane. It localises to the cytoplasm. It catalyses the reaction ATP + H2O + cellular proteinSide 1 = ADP + phosphate + cellular proteinSide 2.. Part of the Sec protein translocase complex. Interacts with the SecYEG preprotein conducting channel. Has a central role in coupling the hydrolysis of ATP to the transfer of proteins into and across the cell membrane, serving both as a receptor for the preprotein-SecB complex and as an ATP-driven molecular motor driving the stepwise translocation of polypeptide chains across the membrane. The polypeptide is Protein translocase subunit SecA (Bordetella bronchiseptica (strain ATCC BAA-588 / NCTC 13252 / RB50) (Alcaligenes bronchisepticus)).